Here is a 335-residue protein sequence, read N- to C-terminus: MIEFHNVHKTYRVAGKEIPALHPTSLRVDGGQVFGIIGHSGAGKSTLLRLINRLETPSGGQIVVDGEDVTALDANGLRRFRQQVGMIFQHFNLLASKTVADNVAMPLTLAGDMSRKQIDQRVAELLKRVGLSDHAKKYPAQLSGGQKQRVGIARALATKPKILLCDEATSALDPQTTASVLQLLAEINRELKLTIVLITHEMDVIRRVCDQVAVMDAGVIVEQGKVADVFLHPQHPTTRRFVQEDDQIDENEQRDDFAHVQGRIVRLTFQGDATYAPLLGTVARETGVDYSILAGRIDRIKDTPYGQLTLAITGGDMDAAFARFTAADVHMEVLR.

The region spanning 2-242 is the ABC transporter domain; the sequence is IEFHNVHKTY…PQHPTTRRFV (241 aa). 38–45 contacts ATP; that stretch reads GHSGAGKS.

It belongs to the ABC transporter superfamily. Methionine importer (TC 3.A.1.24) family. As to quaternary structure, the complex is composed of two ATP-binding proteins (MetN), two transmembrane proteins (MetI) and a solute-binding protein (MetQ).

It localises to the cell inner membrane. It carries out the reaction L-methionine(out) + ATP + H2O = L-methionine(in) + ADP + phosphate + H(+). The enzyme catalyses D-methionine(out) + ATP + H2O = D-methionine(in) + ADP + phosphate + H(+). In terms of biological role, part of the ABC transporter complex MetNIQ involved in methionine import. Responsible for energy coupling to the transport system. The sequence is that of Methionine import ATP-binding protein MetN 1 from Pseudomonas savastanoi pv. phaseolicola (strain 1448A / Race 6) (Pseudomonas syringae pv. phaseolicola (strain 1448A / Race 6)).